A 1217-amino-acid chain; its full sequence is DNA-directed RNA polymerase subunit beta' (1217 aa).

Zn(2+)-binding residues include Cys60, Cys62, Cys75, and Cys78. Residues Asp449, Asp451, and Asp453 each coordinate Mg(2+). Zn(2+)-binding residues include Cys821, Cys895, Cys902, and Cys905.

The protein belongs to the RNA polymerase beta' chain family. The RNAP catalytic core consists of 2 alpha, 1 beta, 1 beta' and 1 omega subunit. When a sigma factor is associated with the core the holoenzyme is formed, which can initiate transcription. Mg(2+) is required as a cofactor. Zn(2+) serves as cofactor.

It catalyses the reaction RNA(n) + a ribonucleoside 5'-triphosphate = RNA(n+1) + diphosphate. Functionally, DNA-dependent RNA polymerase catalyzes the transcription of DNA into RNA using the four ribonucleoside triphosphates as substrates. The sequence is that of DNA-directed RNA polymerase subunit beta' from Lactobacillus acidophilus (strain ATCC 700396 / NCK56 / N2 / NCFM).